The chain runs to 509 residues: Cytochrome P450 monooxygenase AFT11-1 (509 aa).

Cys-432 is a binding site for heme.

This sequence belongs to the cytochrome P450 family. Requires heme as cofactor.

It participates in mycotoxin biosynthesis. In terms of biological role, cytochrome P450 monooxygenase; part of the gene clusters that mediate the biosynthesis of the host-selective toxins (HSTs) AF-toxins responsible for Alternaria black spot of strawberry disease by the strawberry pathotype. AF-toxin I and III are valine derivatives of 2,3-dyhydroxy-isovaleric acid and 2-hydroxy-isovaleric acid respectively, while AF II is an isoleucine derivative of 2-hydroxy-valeric acid. These derivatives are bound to a 9,10-epoxy-8-hydroxy-9-methyl-decatrienoic acid (EDA) moiety. On cellular level, AF-toxins affect plasma membrane of susceptible cells and cause a sudden increase in loss of K(+) after a few minutes of toxin treatment. The aldo-keto reductase AFTS1 catalyzes the conversion of 2-keto-isovaleric acid (2-KIV) to 2-hydroxy-isovaleric acid (2-HIV) by reduction of its ketone to an alcohol. The acyl-CoA ligase AFT1, the hydrolase AFT2 and the enoyl-CoA hydratases AFT3 and AFT6, but also the polyketide synthase AFT9, the acyl-CoA dehydrogenase AFT10, the cytochrome P450 monooxygenase AFT11 and the oxidoreductase AFT12 are all involved in the biosynthesis of the AK-, AF- and ACT-toxin common EDA structural moiety. The exact function of each enzyme, and of additional enzymes identified within the AF-toxin clusters have still to be determined. The sequence is that of Cytochrome P450 monooxygenase AFT11-1 from Alternaria alternata (Alternaria rot fungus).